Consider the following 458-residue polypeptide: tRNA modification GTPase MnmE (458 aa).

Arg-26, Glu-88, and Arg-127 together coordinate (6S)-5-formyl-5,6,7,8-tetrahydrofolate. Positions 224 to 378 (GLSTAIIGRP…IEDRINQLFF (155 aa)) constitute a TrmE-type G domain. Position 234 (Asn-234) interacts with K(+). GTP-binding positions include 234-239 (NVGKSS), 253-259 (TDIAGTT), and 278-281 (DTAG). Ser-238 contacts Mg(2+). Thr-253, Ile-255, and Thr-258 together coordinate K(+). Residue Thr-259 participates in Mg(2+) binding. (6S)-5-formyl-5,6,7,8-tetrahydrofolate is bound at residue Lys-458.

Belongs to the TRAFAC class TrmE-Era-EngA-EngB-Septin-like GTPase superfamily. TrmE GTPase family. As to quaternary structure, homodimer. Heterotetramer of two MnmE and two MnmG subunits. K(+) serves as cofactor.

It is found in the cytoplasm. Exhibits a very high intrinsic GTPase hydrolysis rate. Involved in the addition of a carboxymethylaminomethyl (cmnm) group at the wobble position (U34) of certain tRNAs, forming tRNA-cmnm(5)s(2)U34. In Streptococcus pyogenes serotype M3 (strain ATCC BAA-595 / MGAS315), this protein is tRNA modification GTPase MnmE.